Here is a 336-residue protein sequence, read N- to C-terminus: Anthranilate phosphoribosyltransferase (336 aa).

5-phospho-alpha-D-ribose 1-diphosphate-binding positions include G79, 82–83, T87, 89–92, 107–115, and S119; these read GD, NIST, and KHGNRSVSS. Residue G79 coordinates anthranilate. S91 contacts Mg(2+). Anthranilate is bound at residue N110. Residue R165 participates in anthranilate binding. Mg(2+)-binding residues include D224 and E225.

This sequence belongs to the anthranilate phosphoribosyltransferase family. Homodimer. Requires Mg(2+) as cofactor.

It catalyses the reaction N-(5-phospho-beta-D-ribosyl)anthranilate + diphosphate = 5-phospho-alpha-D-ribose 1-diphosphate + anthranilate. The protein operates within amino-acid biosynthesis; L-tryptophan biosynthesis; L-tryptophan from chorismate: step 2/5. Its function is as follows. Catalyzes the transfer of the phosphoribosyl group of 5-phosphorylribose-1-pyrophosphate (PRPP) to anthranilate to yield N-(5'-phosphoribosyl)-anthranilate (PRA). The polypeptide is Anthranilate phosphoribosyltransferase (Endomicrobium trichonymphae).